The following is a 1007-amino-acid chain: Glutamate receptor ionotropic, delta-2 (1007 aa).

An N-terminal signal peptide occupies residues 1 to 23 (MEVFPFLLVLSVWWSRTWDSANA). Residues 24-345 (DSIIHIGAIF…NAFHKKLEDR (322 aa)) are interaction with CBLN1 homotrimer. The Extracellular portion of the chain corresponds to 24 to 566 (DSIIHIGAIF…DMFACLAPFD (543 aa)). Cystine bridges form between Cys-83-Cys-355, Cys-99-Cys-131, and Cys-298-Cys-310. The N-linked (GlcNAc...) asparagine glycan is linked to Asn-293. A glycan (N-linked (GlcNAc...) asparagine) is linked at Asn-426. Residues Glu-531, Val-534, and Asp-535 each contribute to the Ca(2+) site. Residues 567–587 (LSLWACIAGTVLLVGLLVYLL) traverse the membrane as a helical segment. The Cytoplasmic segment spans residues 588-635 (NWLNPPRLQMGSMTSTTLYNSMWFVYGSFVQQGGEVPYTTLATRMMMG). Residues 636–656 (AWWLFALIVISSYTANLAAFL) form a helical membrane-spanning segment. Residues 657–830 (TITRIESSIQ…QKGGALDIKS (174 aa)) lie on the Extracellular side of the membrane. Residues Asn-713 and Asn-716 are each glycosylated (N-linked (GlcNAc...) asparagine). The Ca(2+) site is built by Asp-753, Asp-755, and Ser-757. A helical transmembrane segment spans residues 831–851 (FAGVFCILAAGIVLSCFIAML). The Cytoplasmic portion of the chain corresponds to 852–1007 (ETWWNKRKGS…GNDPDRGTSI (156 aa)). Residue Ser-883 is modified to Phosphoserine. The residue at position 886 (Thr-886) is a Phosphothreonine. Ser-890 carries the phosphoserine modification. An interaction with AP4M1 region spans residues 921-991 (DFRNTHITTT…MSSIPYQPTP (71 aa)). Positions 1005–1007 (TSI) match the PDZ-binding motif. Ser-1006 carries the post-translational modification Phosphoserine.

It belongs to the glutamate-gated ion channel (TC 1.A.10.1) family. GRID2 subfamily. Tetramer; dimer of dimers. Interacts with EML2, MAGI2 (via PDZ domains) and AP4M1. Interacts with BECN1, GOPC, GRID2IP, SHANK1 and SHANK2. Interacts with CBLN2, but not with CBLN4. Interacts with CBLN1 (via C1q domain); the interaction is CBLN1-NRX1 complex formation-dependent; CBLN1-binding is calcium-independent; CBLN1 hexamers anchor GRID2 N-terminal domain dimers to monomeric NRXN1 isoform beta; promotes synaptogenesis and mediates the D-Serine-dependent long term depression signals and AMPA receptor endocytosis.

It is found in the postsynaptic cell membrane. The enzyme catalyses Ca(2+)(in) = Ca(2+)(out). It catalyses the reaction Na(+)(in) = Na(+)(out). Its function is as follows. Member of the ionotropic glutamate receptor family, which plays a crucial role in synaptic organization and signal transduction in the central nervous system. Although it shares structural features with ionotropic glutamate receptors, does not bind glutamate as a primary ligand. Promotes synaptogenesis and mediates the D-Serine-dependent long term depression signals and AMPA receptor endocytosis of cerebellar parallel fiber-Purkinje cell (PF-PC) synapses through the NRX1B-CBLN1-GRID2 triad complex. In the presence of neurexins and cerebellins, forms cation-selective channels that are proposed to be gated by glycine and D-serine. However, recent research disputes this ligand-gated cation channel activity. Cation-selective ion channel activity can be triggered by GRM1 in Purkinje cells. This chain is Glutamate receptor ionotropic, delta-2 (GRID2), found in Homo sapiens (Human).